A 77-amino-acid chain; its full sequence is Protein AC43 (77 aa).

Functionally, plays a role in the production of occlusion bodies as well as expression of the polyhedrin gene. This chain is Protein AC43, found in Autographa californica nuclear polyhedrosis virus (AcMNPV).